Reading from the N-terminus, the 408-residue chain is Peptidase T-like protein RB0614 (408 aa).

Zn(2+) is bound at residue His80. The active site involves Asp82. Asp142 is a binding site for Zn(2+). Glu174 serves as the catalytic Proton acceptor. Residues Glu175, Asp198, and His380 each contribute to the Zn(2+) site.

This sequence belongs to the peptidase M20B family. The cofactor is Zn(2+).

In Rhizobium meliloti (strain 1021) (Ensifer meliloti), this protein is Peptidase T-like protein RB0614.